We begin with the raw amino-acid sequence, 428 residues long: CinA-like protein (428 aa).

This sequence belongs to the CinA family.

The chain is CinA-like protein from Gemmatimonas aurantiaca (strain DSM 14586 / JCM 11422 / NBRC 100505 / T-27).